The sequence spans 99 residues: Large ribosomal subunit protein bL21 (99 aa).

Belongs to the bacterial ribosomal protein bL21 family. Part of the 50S ribosomal subunit. Contacts protein L20.

In terms of biological role, this protein binds to 23S rRNA in the presence of protein L20. In Mycoplasma mobile (strain ATCC 43663 / 163K / NCTC 11711) (Mesomycoplasma mobile), this protein is Large ribosomal subunit protein bL21.